Reading from the N-terminus, the 474-residue chain is tRNA-2-methylthio-N(6)-dimethylallyladenosine synthase (474 aa).

The MTTase N-terminal domain occupies 3–120 (QKLHIKTWGC…LPEMINQIRG (118 aa)). Positions 12, 49, 83, 157, 161, and 164 each coordinate [4Fe-4S] cluster. The Radical SAM core domain maps to 143 to 375 (RAEGPTAFVS…QQRINNQAAQ (233 aa)). Residues 378–441 (RAMLGTEQRV…TNSLRGEVVR (64 aa)) enclose the TRAM domain.

It belongs to the methylthiotransferase family. MiaB subfamily. Monomer. [4Fe-4S] cluster is required as a cofactor.

Its subcellular location is the cytoplasm. It catalyses the reaction N(6)-dimethylallyladenosine(37) in tRNA + (sulfur carrier)-SH + AH2 + 2 S-adenosyl-L-methionine = 2-methylsulfanyl-N(6)-dimethylallyladenosine(37) in tRNA + (sulfur carrier)-H + 5'-deoxyadenosine + L-methionine + A + S-adenosyl-L-homocysteine + 2 H(+). Catalyzes the methylthiolation of N6-(dimethylallyl)adenosine (i(6)A), leading to the formation of 2-methylthio-N6-(dimethylallyl)adenosine (ms(2)i(6)A) at position 37 in tRNAs that read codons beginning with uridine. This Histophilus somni (strain 129Pt) (Haemophilus somnus) protein is tRNA-2-methylthio-N(6)-dimethylallyladenosine synthase.